We begin with the raw amino-acid sequence, 594 residues long: CDPK-related kinase 4 (594 aa).

The interval 1–131 (MGHCYSRNIS…DSGGGERLDK (131 aa)) is disordered. A lipid anchor (N-myristoyl glycine) is attached at G2. Residues 37–58 (IPQSPVASGTPEVNSYNISPFQ) are compositionally biased toward polar residues. The span at 116-131 (VVDHGGDSGGGERLDK) shows a compositional bias: basic and acidic residues. The 263-residue stretch at 143-405 (YELGKEVGRG…AAQALAHPWL (263 aa)) folds into the Protein kinase domain. ATP-binding positions include 149–157 (VGRGHFGHT) and K175. Catalysis depends on D271, which acts as the Proton acceptor. S311 carries the phosphoserine modification. Residues 409–439 (NPGLLLDFSVYKLVKSYIRASPFRRSALKAL) form an autoinhibitory domain region. The segment at 428–448 (ASPFRRSALKALSKAIPDEEL) is calmodulin binding (CaMBD). 4 EF-hand domains span residues 446-481 (EELVFLKAQFMLLDPKDGGLSLNCFTMALTRYATDA), 482-517 (MMESRLPDILNTMQPLAQKKLDFEEFCAAAVSVYQL), 518-557 (EALEEWEQIATSAFEHFEHEGNRIISVQELAGEMSVGPSA), and 558-587 (YPLLKDWIRSSDGKLSFLGYAKFLHGVTVR). D462, K501, E506, N539, E546, S567, D569, and K571 together coordinate Ca(2+). S573 is subject to Phosphoserine.

Belongs to the protein kinase superfamily. Ser/Thr protein kinase family. CDPK subfamily. In terms of assembly, binds calmodulin (CaM) in a calcium-dependent manner. Post-translationally, autophosphorylated.

The protein resides in the cell membrane. The enzyme catalyses L-seryl-[protein] + ATP = O-phospho-L-seryl-[protein] + ADP + H(+). The catalysed reaction is L-threonyl-[protein] + ATP = O-phospho-L-threonyl-[protein] + ADP + H(+). Its activity is regulated as follows. Activated by calcium and calmodulin. Autophosphorylation may play an important role in the regulation of the kinase activity. May play a role in signal transduction pathways that involve calcium as a second messenger. The chain is CDPK-related kinase 4 (CRK4) from Arabidopsis thaliana (Mouse-ear cress).